Consider the following 103-residue polypeptide: Integration host factor subunit beta (103 aa).

The tract at residues Arg59 to Pro82 is disordered.

This sequence belongs to the bacterial histone-like protein family. Heterodimer of an alpha and a beta chain.

In terms of biological role, this protein is one of the two subunits of integration host factor, a specific DNA-binding protein that functions in genetic recombination as well as in transcriptional and translational control. This is Integration host factor subunit beta from Xanthomonas oryzae pv. oryzae (strain MAFF 311018).